The sequence spans 277 residues: Digeranylgeranylglyceryl phosphate synthase (277 aa).

7 consecutive transmembrane segments (helical) span residues 13–33 (PGNA…AGGL), 40–60 (AFAV…NDYF), 89–109 (VALF…AIAI), 143–163 (FLYG…LFAL), 199–219 (RSLY…PLPY), 220–240 (LLGL…CGLA), and 256–276 (WLKA…LAVV).

Belongs to the UbiA prenyltransferase family. DGGGP synthase subfamily. It depends on Mg(2+) as a cofactor.

It is found in the cell membrane. It catalyses the reaction sn-3-O-(geranylgeranyl)glycerol 1-phosphate + (2E,6E,10E)-geranylgeranyl diphosphate = 2,3-bis-O-(geranylgeranyl)-sn-glycerol 1-phosphate + diphosphate. The protein operates within membrane lipid metabolism; glycerophospholipid metabolism. Its function is as follows. Prenyltransferase that catalyzes the transfer of the geranylgeranyl moiety of geranylgeranyl diphosphate (GGPP) to the C2 hydroxyl of (S)-3-O-geranylgeranylglyceryl phosphate (GGGP). This reaction is the second ether-bond-formation step in the biosynthesis of archaeal membrane lipids. In Natronomonas pharaonis (strain ATCC 35678 / DSM 2160 / CIP 103997 / JCM 8858 / NBRC 14720 / NCIMB 2260 / Gabara) (Halobacterium pharaonis), this protein is Digeranylgeranylglyceryl phosphate synthase.